We begin with the raw amino-acid sequence, 546 residues long: Chaperonin GroEL 2 (546 aa).

Residues 30-33 (TLGP), Lys-51, 87-91 (DGTTT), Gly-415, 479-481 (NAA), and Asp-495 contribute to the ATP site. A disordered region spans residues 526-546 (KEDAPMPGGMPGGMGGMGMDM). Residues 534-546 (GMPGGMGGMGMDM) show a composition bias toward gly residues.

The protein belongs to the chaperonin (HSP60) family. In terms of assembly, forms a cylinder of 14 subunits composed of two heptameric rings stacked back-to-back. Interacts with the co-chaperonin GroES.

The protein localises to the cytoplasm. It carries out the reaction ATP + H2O + a folded polypeptide = ADP + phosphate + an unfolded polypeptide.. Functionally, together with its co-chaperonin GroES, plays an essential role in assisting protein folding. The GroEL-GroES system forms a nano-cage that allows encapsulation of the non-native substrate proteins and provides a physical environment optimized to promote and accelerate protein folding. The chain is Chaperonin GroEL 2 from Burkholderia lata (strain ATCC 17760 / DSM 23089 / LMG 22485 / NCIMB 9086 / R18194 / 383).